The chain runs to 236 residues: (5-formylfuran-3-yl)methyl phosphate synthase (236 aa).

Residue Lys27 is the Schiff-base intermediate with substrate of the active site. Lys85 (proton acceptor) is an active-site residue.

This sequence belongs to the MfnB family.

The catalysed reaction is 2 D-glyceraldehyde 3-phosphate = 4-(hydroxymethyl)-2-furancarboxaldehyde phosphate + phosphate + 2 H2O. It functions in the pathway cofactor biosynthesis; methanofuran biosynthesis. In terms of biological role, catalyzes the formation of 4-(hydroxymethyl)-2-furancarboxaldehyde phosphate (4-HFC-P) from two molecules of glyceraldehyde-3-P (GA-3-P). The chain is (5-formylfuran-3-yl)methyl phosphate synthase from Methanococcus maripaludis (strain DSM 14266 / JCM 13030 / NBRC 101832 / S2 / LL).